A 1676-amino-acid polypeptide reads, in one-letter code: Protein TIC 214 (1676 aa).

The next 6 membrane-spanning stretches (helical) occupy residues 23 to 43 (AGPLIILGIYYGFLITLPIAP), 71 to 91 (GILIAAISGLTVSQLAFFLSI), 96 to 116 (LYMIWLKPHLLTLLVLPYMFF), 145 to 165 (AFLDSFLFQALNPVLLPSPVM), 179 to 199 (VSLFILGTAIGWLGGQIMFVL), and 226 to 246 (IFPPIVFGLCLAYMGRAPVSF).

This sequence belongs to the TIC214 family. As to quaternary structure, part of the Tic complex.

The protein resides in the plastid. The protein localises to the chloroplast inner membrane. Functionally, involved in protein precursor import into chloroplasts. May be part of an intermediate translocation complex acting as a protein-conducting channel at the inner envelope. The sequence is that of Protein TIC 214 from Zygnema circumcarinatum (Green alga).